The primary structure comprises 313 residues: Beta-ketoacyl-[acyl-carrier-protein] synthase III (313 aa).

Catalysis depends on residues Cys112 and His238. The segment at 239–243 is ACP-binding; the sequence is QANIR. Asn268 is an active-site residue.

Belongs to the thiolase-like superfamily. FabH family. As to quaternary structure, homodimer.

The protein localises to the cytoplasm. The catalysed reaction is malonyl-[ACP] + acetyl-CoA + H(+) = 3-oxobutanoyl-[ACP] + CO2 + CoA. Its pathway is lipid metabolism; fatty acid biosynthesis. Functionally, catalyzes the condensation reaction of fatty acid synthesis by the addition to an acyl acceptor of two carbons from malonyl-ACP. Catalyzes the first condensation reaction which initiates fatty acid synthesis and may therefore play a role in governing the total rate of fatty acid production. Possesses both acetoacetyl-ACP synthase and acetyl transacylase activities. Its substrate specificity determines the biosynthesis of branched-chain and/or straight-chain of fatty acids. This chain is Beta-ketoacyl-[acyl-carrier-protein] synthase III, found in Staphylococcus aureus (strain COL).